The chain runs to 371 residues: Polygalacturonase (371 aa).

The first 19 residues, 1-19 (MPSYLRNLVWATLAAGLVS), serve as a signal peptide directing secretion. The propeptide occupies 20-34 (AAPTPSRVSDLTKKS). An intrachain disulfide couples Cys-38 to Cys-53. PbH1 repeat units follow at residues 95–117 (GPLI…VINA), 165–195 (SDNL…DISE), 196–217 (STGV…AINS), 218–238 (GQNI…SIGS), 247–268 (VKNV…RIKT), 276–298 (VSDV…VIEQ), and 310–355 (TSGV…DITS). Asp-210 serves as the catalytic Proton donor. A disulfide bridge connects residues Cys-212 and Cys-228. His-232 is an active-site residue. N-linked (GlcNAc...) asparagine glycosylation occurs at Asn-249. Intrachain disulfides connect Cys-338–Cys-343 and Cys-362–Cys-371.

Belongs to the glycosyl hydrolase 28 family.

Its subcellular location is the secreted. It catalyses the reaction (1,4-alpha-D-galacturonosyl)n+m + H2O = (1,4-alpha-D-galacturonosyl)n + (1,4-alpha-D-galacturonosyl)m.. The protein is Polygalacturonase of Penicillium janthinellum (Penicillium vitale).